Here is a 489-residue protein sequence, read N- to C-terminus: tRNA(Ile)-lysidine synthase (489 aa).

Position 35–40 (35–40 (SGGLDS)) interacts with ATP.

This sequence belongs to the tRNA(Ile)-lysidine synthase family.

The protein resides in the cytoplasm. The catalysed reaction is cytidine(34) in tRNA(Ile2) + L-lysine + ATP = lysidine(34) in tRNA(Ile2) + AMP + diphosphate + H(+). Its function is as follows. Ligates lysine onto the cytidine present at position 34 of the AUA codon-specific tRNA(Ile) that contains the anticodon CAU, in an ATP-dependent manner. Cytidine is converted to lysidine, thus changing the amino acid specificity of the tRNA from methionine to isoleucine. The sequence is that of tRNA(Ile)-lysidine synthase from Burkholderia pseudomallei (strain K96243).